The chain runs to 307 residues: Small ribosomal subunit biogenesis GTPase RsgA (307 aa).

Residues 1 to 21 form a disordered region; it reads MPSEHPFSDGISTPNPKETMN. The span at 10-21 shows a compositional bias: polar residues; that stretch reads GISTPNPKETMN. The 158-residue stretch at 85–242 folds into the CP-type G domain; it reads RQDAWKTKLI…LIDSPGLQEF (158 aa). Residues 135–138 and 184–192 contribute to the GTP site; these read NKAD and GQSGMGKST. Zn(2+) contacts are provided by C266, C271, H273, and C279.

It belongs to the TRAFAC class YlqF/YawG GTPase family. RsgA subfamily. Monomer. Associates with 30S ribosomal subunit, binds 16S rRNA. Zn(2+) is required as a cofactor.

The protein localises to the cytoplasm. Its function is as follows. One of several proteins that assist in the late maturation steps of the functional core of the 30S ribosomal subunit. Helps release RbfA from mature subunits. May play a role in the assembly of ribosomal proteins into the subunit. Circularly permuted GTPase that catalyzes slow GTP hydrolysis, GTPase activity is stimulated by the 30S ribosomal subunit. The polypeptide is Small ribosomal subunit biogenesis GTPase RsgA (Neisseria gonorrhoeae (strain ATCC 700825 / FA 1090)).